Reading from the N-terminus, the 331-residue chain is Tryptophan--tRNA ligase (331 aa).

Residues 10–12 (QPS) and 18–19 (GN) each bind ATP. The 'HIGH' region signature appears at 11-19 (PSGQLTLGN). Asp-133 is an L-tryptophan binding site. ATP-binding positions include 145–147 (GED), Val-184, and 193–197 (KMSKS). Positions 193-197 (KMSKS) match the 'KMSKS' region motif.

The protein belongs to the class-I aminoacyl-tRNA synthetase family. Homodimer.

The protein resides in the cytoplasm. It carries out the reaction tRNA(Trp) + L-tryptophan + ATP = L-tryptophyl-tRNA(Trp) + AMP + diphosphate + H(+). Functionally, catalyzes the attachment of tryptophan to tRNA(Trp). The chain is Tryptophan--tRNA ligase from Listeria monocytogenes serovar 1/2a (strain ATCC BAA-679 / EGD-e).